The chain runs to 267 residues: Diphthine synthase (267 aa).

S-adenosyl-L-methionine-binding positions include leucine 9, aspartate 87, isoleucine 90, 115–116 (SI), leucine 166, leucine 205, and histidine 230.

The protein belongs to the diphthine synthase family. As to quaternary structure, homodimer.

It carries out the reaction 2-[(3S)-amino-3-carboxypropyl]-L-histidyl-[translation elongation factor 2] + 3 S-adenosyl-L-methionine = diphthine-[translation elongation factor 2] + 3 S-adenosyl-L-homocysteine + 3 H(+). The protein operates within protein modification; peptidyl-diphthamide biosynthesis. Its function is as follows. S-adenosyl-L-methionine-dependent methyltransferase that catalyzes the trimethylation of the amino group of the modified target histidine residue in translation elongation factor 2 (EF-2), to form an intermediate called diphthine. The three successive methylation reactions represent the second step of diphthamide biosynthesis. The sequence is that of Diphthine synthase from Staphylothermus marinus (strain ATCC 43588 / DSM 3639 / JCM 9404 / F1).